The following is a 764-amino-acid chain: Dehydrocurvularin biosynthesis regulator (764 aa).

The zn(2)-C6 fungal-type DNA-binding region spans 28–59 (CWECKRRKMKCIFDPRITSTSCNGCRQRGSPC). 3 disordered regions span residues 73-94 (HGAN…SDDA), 112-136 (YRYL…ASTC), and 633-672 (FPTS…PALS). Polar residues predominate over residues 77 to 88 (DSASLDASTPIA). A compositionally biased stretch (polar residues) spans 663–672 (HPNTPSPALS).

The protein localises to the nucleus. In terms of biological role, transcription factor involved in regulation of the dehydrocurvularin biosynthesis gene cluster. This Alternaria cinerariae protein is Dehydrocurvularin biosynthesis regulator.